The following is a 319-amino-acid chain: Na(+)-translocating NADH-quinone reductase subunit C (319 aa).

A helical membrane pass occupies residues 14–34; it reads WYVILFIFALSLFSSVFLSTV. An FMN phosphoryl threonine modification is found at T283.

It belongs to the NqrC family. Composed of six subunits; NqrA, NqrB, NqrC, NqrD, NqrE and NqrF. FMN is required as a cofactor.

The protein localises to the cell inner membrane. The enzyme catalyses a ubiquinone + n Na(+)(in) + NADH + H(+) = a ubiquinol + n Na(+)(out) + NAD(+). In terms of biological role, NQR complex catalyzes the reduction of ubiquinone-1 to ubiquinol by two successive reactions, coupled with the transport of Na(+) ions from the cytoplasm to the periplasm. NqrA to NqrE are probably involved in the second step, the conversion of ubisemiquinone to ubiquinol. The polypeptide is Na(+)-translocating NADH-quinone reductase subunit C (Chlamydia caviae (strain ATCC VR-813 / DSM 19441 / 03DC25 / GPIC) (Chlamydophila caviae)).